The chain runs to 172 residues: uncharacterized protein (172 aa).

The next 4 membrane-spanning stretches (helical) occupy residues M46–P66, L76–F96, W104–S124, and F129–I149.

The protein resides in the endoplasmic reticulum membrane. This is an uncharacterized protein from Schizosaccharomyces pombe (strain 972 / ATCC 24843) (Fission yeast).